Here is a 467-residue protein sequence, read N- to C-terminus: Ribosome biogenesis protein YTM1 (467 aa).

Residues 8 to 95 (IKIKFFTNEE…ETFLSLEYTR (88 aa)) are ubiquitin-like (UBL) domain. The segment at 105 to 467 (SFNNEDWISS…QINKGSDISK (363 aa)) is sufficient for interaction with ERB1 and association with 66S pre-ribosomes. WD repeat units lie at residues 120-159 (KTLP…EKQY), 161-199 (GHSG…GSIP), 216-255 (GHKA…MTTI), 293-333 (SHTQ…CIDT), 335-374 (STGY…NTTE), 382-422 (GHTN…SLYT), and 432-467 (KGAD…DISK).

Belongs to the WD repeat WDR12/YTM1 family. Component of the NOP7 complex, composed of ERB1, NOP7 and YTM1. The complex is held together by ERB1, which interacts with NOP7 via its N-terminal domain and with YTM1 via a high-affinity interaction between the seven-bladed beta-propeller domains of the 2 proteins. The NOP7 complex associates with the 66S pre-ribosome. Interacts (via UBL domain) with MDN1 (via VWFA/MIDAS domain).

Its subcellular location is the nucleus. It is found in the nucleolus. The protein resides in the nucleoplasm. Its function is as follows. Component of the NOP7 complex, which is required for maturation of the 25S and 5.8S ribosomal RNAs and formation of the 60S ribosome. This Scheffersomyces stipitis (strain ATCC 58785 / CBS 6054 / NBRC 10063 / NRRL Y-11545) (Yeast) protein is Ribosome biogenesis protein YTM1.